Consider the following 348-residue polypeptide: tRNA pseudouridine synthase D (348 aa).

F27 contacts substrate. Residue D80 is the Nucleophile of the active site. N129 is a substrate binding site. A TRUD domain is found at 155–303; that stretch reads GVPNYFGSQR…VEPARRAVLL (149 aa). Position 329 (F329) interacts with substrate.

This sequence belongs to the pseudouridine synthase TruD family.

It catalyses the reaction uridine(13) in tRNA = pseudouridine(13) in tRNA. Its function is as follows. Responsible for synthesis of pseudouridine from uracil-13 in transfer RNAs. The sequence is that of tRNA pseudouridine synthase D from Pectobacterium atrosepticum (strain SCRI 1043 / ATCC BAA-672) (Erwinia carotovora subsp. atroseptica).